The sequence spans 87 residues: Putative defensin-like protein 84 (87 aa).

Positions 1–27 (MTTKMVSSHRLLTLMVFALLLIPMISG) are cleaved as a signal peptide. 4 disulfides stabilise this stretch: Cys32–Cys73, Cys36–Cys54, Cys42–Cys71, and Cys46–Cys72.

This sequence belongs to the DEFL family.

It is found in the secreted. The protein is Putative defensin-like protein 84 of Arabidopsis thaliana (Mouse-ear cress).